The primary structure comprises 470 residues: DNA primase large subunit (470 aa).

Cys279, Cys358, Cys376, and Cys414 together coordinate [4Fe-4S] cluster. The interval 449–470 (EEKKSAKQSNNKENENQSIDEK) is disordered.

The protein belongs to the eukaryotic-type primase large subunit family. In terms of assembly, heterodimer of a small subunit and a large subunit. [4Fe-4S] cluster is required as a cofactor.

Functionally, DNA primase is the polymerase that synthesizes small RNA primers for the Okazaki fragments made during discontinuous DNA replication. This is DNA primase large subunit (prim2) from Dictyostelium discoideum (Social amoeba).